A 96-amino-acid polypeptide reads, in one-letter code: Co-chaperonin GroES 1 (96 aa).

The protein belongs to the GroES chaperonin family. In terms of assembly, heptamer of 7 subunits arranged in a ring. Interacts with the chaperonin GroEL.

The protein localises to the cytoplasm. Its function is as follows. Together with the chaperonin GroEL, plays an essential role in assisting protein folding. The GroEL-GroES system forms a nano-cage that allows encapsulation of the non-native substrate proteins and provides a physical environment optimized to promote and accelerate protein folding. GroES binds to the apical surface of the GroEL ring, thereby capping the opening of the GroEL channel. This is Co-chaperonin GroES 1 from Vibrio cholerae serotype O1 (strain ATCC 39315 / El Tor Inaba N16961).